The chain runs to 370 residues: Glutamate 5-kinase (370 aa).

Lysine 17 contributes to the ATP binding site. Residues serine 57, aspartate 144, and asparagine 156 each contribute to the substrate site. ATP-binding positions include 176–177 (SD) and 220–226 (TGGMVSK). The PUA domain maps to 282 to 360 (SGTLTLDDGA…SDLPAEMRRP (79 aa)).

It belongs to the glutamate 5-kinase family.

It is found in the cytoplasm. The catalysed reaction is L-glutamate + ATP = L-glutamyl 5-phosphate + ADP. Its pathway is amino-acid biosynthesis; L-proline biosynthesis; L-glutamate 5-semialdehyde from L-glutamate: step 1/2. Its function is as follows. Catalyzes the transfer of a phosphate group to glutamate to form L-glutamate 5-phosphate. The chain is Glutamate 5-kinase from Mycolicibacterium gilvum (strain PYR-GCK) (Mycobacterium gilvum (strain PYR-GCK)).